The primary structure comprises 496 residues: Cytochrome P450 71D180 (496 aa).

Residues 1-21 (MDISISWVVIIVFVLSYLILM) form a helical; Signal-anchor for type II membrane protein membrane-spanning segment. Cys435 contributes to the heme binding site. The tract at residues 471–496 (MSETPGLSGPRKNPLIMIPTIHNPTS) is disordered.

It belongs to the cytochrome P450 family. Requires heme as cofactor.

Its subcellular location is the membrane. It catalyses the reaction gamma-terpinene + 2 reduced [NADPH--hemoprotein reductase] + 2 O2 = carvacrol + 2 oxidized [NADPH--hemoprotein reductase] + 3 H2O + 2 H(+). The enzyme catalyses (4S)-limonene + reduced [NADPH--hemoprotein reductase] + O2 = (1S,5R)-carveol + oxidized [NADPH--hemoprotein reductase] + H2O + H(+). It carries out the reaction (4R)-limonene + reduced [NADPH--hemoprotein reductase] + O2 = (1R,5S)-carveol + oxidized [NADPH--hemoprotein reductase] + H2O + H(+). It participates in secondary metabolite biosynthesis; terpenoid biosynthesis. Involved in the biosynthesis of phenolic monoterpenes natural products thymol and carvacrol which have a broad range of biological activities acting as antimicrobial compounds, insecticides, antioxidants and pharmaceutical agents. Catalyzes the C2-hydroxylation of gamma-terpinene to produce carvacrol. Mediates also the C6-hydroxylation of (4S)-limonene and (4R)-limonene to form carveol. The protein is Cytochrome P450 71D180 of Origanum majorana (Sweet marjoram).